The sequence spans 37 residues: Cytochrome b6-f complex subunit 5 (37 aa).

The chain crosses the membrane as a helical span at residues 5–25 (LLDGLVLGLVFATLGGLFYAA).

The protein belongs to the PetG family. The 4 large subunits of the cytochrome b6-f complex are cytochrome b6, subunit IV (17 kDa polypeptide, PetD), cytochrome f and the Rieske protein, while the 4 small subunits are PetG, PetL, PetM and PetN. The complex functions as a dimer.

The protein localises to the cellular thylakoid membrane. Functionally, component of the cytochrome b6-f complex, which mediates electron transfer between photosystem II (PSII) and photosystem I (PSI), cyclic electron flow around PSI, and state transitions. PetG is required for either the stability or assembly of the cytochrome b6-f complex. The polypeptide is Cytochrome b6-f complex subunit 5 (Mastigocladus laminosus (Fischerella sp.)).